The chain runs to 102 residues: Class II hydrophobin 3 (102 aa).

The N-terminal stretch at Met-1–Ala-16 is a signal peptide. 4 disulfides stabilise this stretch: Cys-33/Cys-83, Cys-44/Cys-74, Cys-45/Cys-57, and Cys-84/Cys-95.

It belongs to the cerato-ulmin hydrophobin family. Homotetramer. Further self-assembles to form highly ordered films at water-air interfaces through intermolecular interactions. Expressed in the conidia, vegetative growth and induction growth stages.

The protein localises to the secreted. It is found in the cell wall. The protein resides in the cytoplasm. Functionally, aerial growth, conidiation, and dispersal of filamentous fungi in the environment rely upon a capability of their secreting small amphipathic proteins called hydrophobins (HPBs) with low sequence identity. Class I can self-assemble into an outermost layer of rodlet bundles on aerial cell surfaces, conferring cellular hydrophobicity that supports fungal growth, development and dispersal; whereas Class II form highly ordered films at water-air interfaces through intermolecular interactions but contribute nothing to the rodlet structure. Hbf3 is a class II hydrophobin that has a role in vegetative growth and asexual development. The protein is Class II hydrophobin 3 of Hypocrea jecorina (strain QM6a) (Trichoderma reesei).